Consider the following 796-residue polypeptide: ATP-dependent DNA helicase PIF6 (796 aa).

Positions 197-230 are disordered; sequence RPTGLPSAHSGGKLPKHMGGDELNPQLEGSTTPG. 255-262 is an ATP binding site; sequence GSAGTGKT. The DNA-binding element occupies 636–655; the sequence is QAYVALSRVRSREDLMLTAF. Disordered regions lie at residues 692 to 719 and 762 to 796; these read KGKT…PEEH and TSSA…VDDD.

It belongs to the helicase family. PIF1 subfamily. In terms of assembly, monomer. Requires Mg(2+) as cofactor.

The protein localises to the nucleus. The enzyme catalyses Couples ATP hydrolysis with the unwinding of duplex DNA at the replication fork by translocating in the 5'-3' direction. This creates two antiparallel DNA single strands (ssDNA). The leading ssDNA polymer is the template for DNA polymerase III holoenzyme which synthesizes a continuous strand.. It carries out the reaction ATP + H2O = ADP + phosphate + H(+). In terms of biological role, DNA-dependent ATPase and 5'-3' DNA helicase required for the maintenance of genome stability. The chain is ATP-dependent DNA helicase PIF6 from Trypanosoma brucei brucei (strain 927/4 GUTat10.1).